The following is a 661-amino-acid chain: Ecdysteroid-phosphate phosphatase (661 aa).

Positions 16–57 (KQDVSPLQILLQMGFRRQRALKALAATGNRSVQLASDWLLTH) constitute a UBA domain. The SH3 domain occupies 235-300 (ANHQVYKVTQ…PAVYTRRTAE (66 aa)). The active site involves Arg-409. Catalysis depends on His-410, which acts as the Tele-phosphohistidine intermediate. Residue His-590 is part of the active site.

Homodimer. In terms of tissue distribution, detected in non-diapause eggs, with highest expression between 2 and 5 days after oviposition. Not detected in other tissues tested.

The protein localises to the cytoplasm. It localises to the cytosol. The enzyme catalyses ecdysone 22-phosphate + H2O = ecdysone + phosphate. It catalyses the reaction 20-hydroxyecdysone 22-phosphate + H2O = 20-hydroxyecdysone + phosphate. The catalysed reaction is 2-deoxyecdysone 22-phosphate + H2O = 2-deoxyecdysone + phosphate. It carries out the reaction O-phospho-L-tyrosyl-[protein] + H2O = L-tyrosyl-[protein] + phosphate. With respect to regulation, competitively inhibited by 4-nitrophenyl phosphate (para-nitrophenylphosphate, pNPP). Also inhibited by tungstate, vanadate, and phosphate. Steroid phosphatase which catalyzes the conversion of inactive phosphorylated ecdysteroids into their active forms. Shows high activity towards ecdysone 22-phosphate (E22P). Has lower activity towards other ecdysteriod phosphates including 20-hydroxyecdysone 22-phosphate (20E22P) and 2-deoxyecdysone 22-phosphate (2dE22P). Also has protein tyrosine phosphatase activity. The chain is Ecdysteroid-phosphate phosphatase from Bombyx mori (Silk moth).